We begin with the raw amino-acid sequence, 188 residues long: Probable nicotinate-nucleotide adenylyltransferase (188 aa).

Belongs to the NadD family.

The enzyme catalyses nicotinate beta-D-ribonucleotide + ATP + H(+) = deamido-NAD(+) + diphosphate. The protein operates within cofactor biosynthesis; NAD(+) biosynthesis; deamido-NAD(+) from nicotinate D-ribonucleotide: step 1/1. In terms of biological role, catalyzes the reversible adenylation of nicotinate mononucleotide (NaMN) to nicotinic acid adenine dinucleotide (NaAD). The chain is Probable nicotinate-nucleotide adenylyltransferase from Listeria innocua serovar 6a (strain ATCC BAA-680 / CLIP 11262).